The sequence spans 186 residues: Ribosome maturation factor RimM (186 aa).

In terms of domain architecture, PRC barrel spans 93–168 (EDDFYLVDLI…VLIDPPQEEN (76 aa)). The interval 163–186 (PPQEENAPEFGRNELGHDDGGEAA) is disordered. Residues 173-186 (GRNELGHDDGGEAA) show a composition bias toward basic and acidic residues.

The protein belongs to the RimM family. In terms of assembly, binds ribosomal protein uS19.

The protein resides in the cytoplasm. Functionally, an accessory protein needed during the final step in the assembly of 30S ribosomal subunit, possibly for assembly of the head region. Essential for efficient processing of 16S rRNA. May be needed both before and after RbfA during the maturation of 16S rRNA. It has affinity for free ribosomal 30S subunits but not for 70S ribosomes. This chain is Ribosome maturation factor RimM, found in Granulibacter bethesdensis (strain ATCC BAA-1260 / CGDNIH1).